The sequence spans 435 residues: Virulence factor PIT1 (435 aa).

The next 5 membrane-spanning stretches (helical) occupy residues 33–53, 77–97, 111–131, 143–163, and 204–224; these read ETTT…SEVI, IFFI…ILVT, WAWT…CVIG, VASW…MWTN, and TFWF…ACCI. Asn-330 is a glycosylation site (N-linked (GlcNAc...) asparagine). The segment covering 392-404 has biased composition (polar residues); the sequence is SPQMPSKAQSQSI. The tract at residues 392 to 435 is disordered; the sequence is SPQMPSKAQSQSIPYKREVEVTVDMSPVPPPPGPSPAPLPAPYM. The span at 418-435 shows a compositional bias: pro residues; that stretch reads PVPPPPGPSPAPLPAPYM.

O-mannosylated by PMT4. Is also N-glycosylated.

It is found in the cell membrane. In terms of biological role, plasma membrane virulence factor required for spreading and inducing tumors in infected leaves. This chain is Virulence factor PIT1, found in Mycosarcoma maydis (Corn smut fungus).